Reading from the N-terminus, the 1023-residue chain is 1-phosphatidylinositol 4,5-bisphosphate phosphodiesterase beta-4 (1023 aa).

The region spanning glutamine 149 to glutamine 299 is the PI-PLC X-box domain. Catalysis depends on residues histidine 164 and histidine 211. The PI-PLC Y-box domain occupies leucine 413–arginine 529. The region spanning aspartate 532–leucine 657 is the C2 domain. Disordered stretches follow at residues alanine 711–arginine 742 and lysine 930–leucine 958. Composition is skewed to polar residues over residues alanine 729–arginine 742 and methionine 933–aspartate 942. Position 734 is a phosphothreonine (threonine 734). The span at lysine 943–glutamate 957 shows a compositional bias: basic and acidic residues.

Requires Ca(2+) as cofactor. In terms of processing, the N-terminus is blocked. In terms of tissue distribution, preferentially expressed in the retina.

Its subcellular location is the cell membrane. The enzyme catalyses a 1,2-diacyl-sn-glycero-3-phospho-(1D-myo-inositol-4,5-bisphosphate) + H2O = 1D-myo-inositol 1,4,5-trisphosphate + a 1,2-diacyl-sn-glycerol + H(+). It catalyses the reaction a 1,2-diacyl-sn-glycero-3-phospho-(1D-myo-inositol) + H2O = 1D-myo-inositol 1-phosphate + a 1,2-diacyl-sn-glycerol + H(+). Its function is as follows. Activated phosphatidylinositol-specific phospholipase C enzymes catalyze the production of the second messenger molecules diacylglycerol (DAG) and inositol 1,4,5-trisphosphate (IP3) involved in G-protein coupled receptor signaling pathways. PLCB4 is a direct effector of the endothelin receptor signaling pathway that plays an essential role in lower jaw and middle ear structures development. This chain is 1-phosphatidylinositol 4,5-bisphosphate phosphodiesterase beta-4 (PLCB4), found in Bos taurus (Bovine).